The chain runs to 555 residues: (+)-delta-cadinene synthase isozyme A (555 aa).

Residues 1–22 (MASQASQVLASPHPAISSENRP) form a disordered region. Residues Asp-308, Asp-312, Asp-452, and Glu-456 each coordinate Mg(2+). The DDXXD motif motif lies at 308 to 312 (DDTYD).

This sequence belongs to the terpene synthase family. The cofactor is Mg(2+).

It carries out the reaction (2E,6E)-farnesyl diphosphate = (1S,8aR)-delta-cadinene + diphosphate. Its pathway is secondary metabolite biosynthesis; terpenoid biosynthesis. In terms of biological role, responsible for the cyclization of trans,trans-farnesyl diphosphate (FPP) to (+)-delta cadinene. In Gossypium arboreum (Tree cotton), this protein is (+)-delta-cadinene synthase isozyme A (CAD1-A).